We begin with the raw amino-acid sequence, 371 residues long: Anhydro-N-acetylmuramic acid kinase (371 aa).

Residue 12–20 (GTVLDGNID) coordinates ATP.

Belongs to the anhydro-N-acetylmuramic acid kinase family.

The enzyme catalyses 1,6-anhydro-N-acetyl-beta-muramate + ATP + H2O = N-acetyl-D-muramate 6-phosphate + ADP + H(+). The protein operates within amino-sugar metabolism; 1,6-anhydro-N-acetylmuramate degradation. It functions in the pathway cell wall biogenesis; peptidoglycan recycling. In terms of biological role, catalyzes the specific phosphorylation of 1,6-anhydro-N-acetylmuramic acid (anhMurNAc) with the simultaneous cleavage of the 1,6-anhydro ring, generating MurNAc-6-P. Is required for the utilization of anhMurNAc either imported from the medium or derived from its own cell wall murein, and thus plays a role in cell wall recycling. The polypeptide is Anhydro-N-acetylmuramic acid kinase (Mesorhizobium japonicum (strain LMG 29417 / CECT 9101 / MAFF 303099) (Mesorhizobium loti (strain MAFF 303099))).